The following is a 66-amino-acid chain: Translational regulator CsrA (66 aa).

Belongs to the CsrA/RsmA family. Homodimer; the beta-strands of each monomer intercalate to form a hydrophobic core, while the alpha-helices form wings that extend away from the core.

The protein resides in the cytoplasm. In terms of biological role, a key translational regulator that binds mRNA to regulate translation initiation and/or mRNA stability. Mediates global changes in gene expression, shifting from rapid growth to stress survival by linking envelope stress, the stringent response and the catabolite repression systems. Usually binds in the 5'-UTR; binding at or near the Shine-Dalgarno sequence prevents ribosome-binding, repressing translation, binding elsewhere in the 5'-UTR can activate translation and/or stabilize the mRNA. Its function is antagonized by small RNA(s). The polypeptide is Translational regulator CsrA (Alkalilimnicola ehrlichii (strain ATCC BAA-1101 / DSM 17681 / MLHE-1)).